Reading from the N-terminus, the 301-residue chain is Fluoroquinolones export ATP-binding protein MT2762 (301 aa).

The ABC transporter domain maps to Ile-18 to Tyr-246. Gly-52 to Ser-59 is a binding site for ATP.

Belongs to the ABC transporter superfamily. In terms of assembly, the complex is composed of 2 ATP-binding proteins and 2 transmembrane proteins.

It localises to the cell membrane. Functionally, part of the ABC transporter complex involved in fluoroquinolones export. Probably responsible for energy coupling to the transport system. The sequence is that of Fluoroquinolones export ATP-binding protein MT2762 from Mycobacterium tuberculosis (strain CDC 1551 / Oshkosh).